Consider the following 674-residue polypeptide: Protein asunder (674 aa).

Positions 516–538 (HKAKDQYRLLYRELEQLIQLNAS) form a coiled coil. The short motif at 601-607 (LKASKRR) is the Nuclear localization signal (NLS) element.

Belongs to the Integrator subunit 13 family. Belongs to the multiprotein complex Integrator, at least composed of IntS1, IntS2, IntS3, IntS4, omd/IntS5, IntS6, defl/IntS7, IntS8, IntS9, IntS10, IntS11, IntS12, asun/IntS13, IntS14 and IntS15. The core complex associates with protein phosphatase 2A subunits mts/PP2A and Pp2A-29B, to form the Integrator-PP2A (INTAC) complex. Phosphorylated.

It is found in the nucleus. The protein localises to the cytoplasm. The protein resides in the perinuclear region. Its function is as follows. Component of the integrator complex, a multiprotein complex that terminates RNA polymerase II (Pol II) transcription in the promoter-proximal region of genes. The integrator complex provides a quality checkpoint during transcription elongation by driving premature transcription termination of transcripts that are unfavorably configured for transcriptional elongation: the complex terminates transcription by (1) catalyzing dephosphorylation of the C-terminal domain (CTD) of Pol II subunit Polr2A/Rbp1 and Spt5, and (2) degrading the exiting nascent RNA transcript via endonuclease activity. The integrator complex is also involved in the 3'-end processing of the U7 snRNA, and also the spliceosomal snRNAs U1, U2, U4 and U5. The protein is Protein asunder (asun) of Drosophila persimilis (Fruit fly).